Consider the following 231-residue polypeptide: Response regulator MprA (231 aa).

A Response regulatory domain is found at 4 to 118; sequence RILVVDDDRA…ELLARMRALL (115 aa). 4-aspartylphosphate is present on Asp48. The ompR/PhoB-type DNA-binding region spans 130–228; the sequence is SAAMTFSDLS…VRGVGYVLRE (99 aa).

Phosphorylated and dephosphorylated by MprB.

It localises to the cytoplasm. In terms of biological role, member of the two-component regulatory system MprB/MprA which contributes to maintaining a balance among several systems involved in stress resistance and is required for establishment and maintenance of persistent infection in the host. Functions as a transcriptional regulator that recognizes a 19-bp nucleotide motif comprizing two loosely conserved 8-bp direct DNA-binding motif repeats separated by a 3-bp spacer region. In Mycolicibacterium vanbaalenii (strain DSM 7251 / JCM 13017 / BCRC 16820 / KCTC 9966 / NRRL B-24157 / PYR-1) (Mycobacterium vanbaalenii), this protein is Response regulator MprA (mprA).